We begin with the raw amino-acid sequence, 633 residues long: Mitochondrial Rho GTPase 1 (633 aa).

In terms of domain architecture, Miro 1 spans 1–170 (MATVRICVCG…FFLCQKAVTH (170 aa)). Residues 1-603 (MATVRICVCG…PRSEEDVEGK (603 aa)) lie on the Cytoplasmic side of the membrane. GTP-binding positions include 10–17 (GDEGTGKS), 59–63 (DTSAL), and 115–118 (NKSD). EF-hand domains are found at residues 186–221 (AAVA…CFEK) and 306–341 (EGYR…TPGL). Residues Asp-199, Asp-201, Asp-203, Tyr-205, Glu-210, Asp-319, Asp-321, Asp-323, and Glu-330 each coordinate Ca(2+). The segment at 398–418 (NPSTTAALKVTRPRKRRKRPG) is disordered. Over residues 408-418 (TRPRKRRKRPG) the composition is skewed to basic residues. A Miro 2 domain is found at 422 to 588 (RNVVLGHVLG…FVHIAEAAME (167 aa)). GTP is bound by residues 431-438 (GPPGSGKS), 467-471 (ELPGG), and 537-540 (LKAD). The helical; Anchor for type IV membrane protein transmembrane segment at 604–624 (WMAWGIALGAVVCAGAAAVMI) threads the bilayer. At 625 to 633 (WRRVSGSGT) the chain is on the mitochondrial intermembrane side.

Belongs to the mitochondrial Rho GTPase family.

The protein localises to the mitochondrion outer membrane. Mitochondrial GTPase involved in mitochondrial trafficking. Probably involved in control of anterograde transport of mitochondria and their subcellular distribution. In Aspergillus oryzae (strain ATCC 42149 / RIB 40) (Yellow koji mold), this protein is Mitochondrial Rho GTPase 1 (gem1).